We begin with the raw amino-acid sequence, 206 residues long: Holliday junction branch migration complex subunit RuvA (206 aa).

The tract at residues 1–62 (MYDYLKGLIT…EDAQVLYGFP (62 aa)) is domain I. The domain II stretch occupies residues 63–141 (NLDQRELFRK…SLLETIELPS (79 aa)). Residues 142–152 (TEDELPLFGVH) form a flexible linker region. Residues 153 to 206 (PYKHELEEAILALAALGYSEKELEKIRPLLEDNDKLETTDAYMKQALQLLLKLK) are domain III.

This sequence belongs to the RuvA family. In terms of assembly, homotetramer. Forms an RuvA(8)-RuvB(12)-Holliday junction (HJ) complex. HJ DNA is sandwiched between 2 RuvA tetramers; dsDNA enters through RuvA and exits via RuvB. An RuvB hexamer assembles on each DNA strand where it exits the tetramer. Each RuvB hexamer is contacted by two RuvA subunits (via domain III) on 2 adjacent RuvB subunits; this complex drives branch migration. In the full resolvosome a probable DNA-RuvA(4)-RuvB(12)-RuvC(2) complex forms which resolves the HJ.

The protein localises to the cytoplasm. The RuvA-RuvB-RuvC complex processes Holliday junction (HJ) DNA during genetic recombination and DNA repair, while the RuvA-RuvB complex plays an important role in the rescue of blocked DNA replication forks via replication fork reversal (RFR). RuvA specifically binds to HJ cruciform DNA, conferring on it an open structure. The RuvB hexamer acts as an ATP-dependent pump, pulling dsDNA into and through the RuvAB complex. HJ branch migration allows RuvC to scan DNA until it finds its consensus sequence, where it cleaves and resolves the cruciform DNA. This is Holliday junction branch migration complex subunit RuvA from Lysinibacillus sphaericus (strain C3-41).